A 458-amino-acid polypeptide reads, in one-letter code: Cell death abnormality protein 8 (458 aa).

The Cytoplasmic segment spans residues 1–45 (MFLKKHKSKLLLVPRDEEQEDAGIVAVLTDRIPSVLLVRWFDLFC). The chain crosses the membrane as a helical span at residues 46-66 (FGFAMCSYALDFFSDIGIAIF). Residues 67 to 77 (HFWAGRYLSGS) are Extracellular-facing. A helical membrane pass occupies residues 78–98 (LVLAFALLPSVIINIISMVWM). At 99–123 (LDDEMHWKRRAHPRRTGTFELNQKR) the chain is on the cytoplasmic side. A helical transmembrane segment spans residues 124-144 (FIPLSKMIVLCICQMGPLFWY). The Extracellular portion of the chain corresponds to 145 to 219 (YKALYYGWMF…YYQTGTYPYW (75 aa)). Residues 220–240 (LYFQAASLLLSIISISWSVVV) form a helical membrane-spanning segment. At 241–274 (QNRSLRMIRDDKVNIWPHEAVLQFCWRFLTILAR) the chain is on the cytoplasmic side. The next 2 helical transmembrane spans lie at 275–295 (IITL…LISV) and 296–316 (HLLV…DACT). A topological domain (extracellular) is located at residue His317. The chain crosses the membrane as a helical span at residues 318 to 338 (IEKLLLLINTFIHIFIPFNMV). The Cytoplasmic segment spans residues 339-353 (EGNTRWRYLTAYSVE). A helical transmembrane segment spans residues 354-374 (FIEMMLVCWLLPLSLNTFPYI). Over 375–378 (EKVQ) the chain is Extracellular. A helical membrane pass occupies residues 379–399 (VGVPISFIAGIAIMMMYYQFF). At 400-458 (HPNRRQLIVTQSQEDLSLNVQKSVETLTPKLESSLEISGEQNTSQDLVSELLLDVEHEN) the chain is on the cytoplasmic side.

The protein belongs to the XK family. In terms of processing, cleavage by ced-3 activates ced-8 function in promoting phosphatidylserine exposure at the surface of apoptotic cells.

Its subcellular location is the cell membrane. The catalysed reaction is a 1,2-diacyl-sn-glycero-3-phospho-L-serine(in) = a 1,2-diacyl-sn-glycero-3-phospho-L-serine(out). Its function is as follows. Phospholipid scramblase that acts downstream of ced-9 and caspase ced-3 to promote phosphatidylserine exposure on apoptotic cell surface. Phosphatidylserine is a specific marker only present at the surface of apoptotic cells and acts as a specific signal for engulfment. Regulates apoptosis kinetics during embryonic development. Not required for engulfment of germ cell corpses. The protein is Cell death abnormality protein 8 of Caenorhabditis elegans.